Consider the following 576-residue polypeptide: Sulfite reductase [NADPH] hemoprotein beta-component (576 aa).

The segment covering 1–12 (MNVKTEPDRSRD) has biased composition (basic and acidic residues). The disordered stretch occupies residues 1–25 (MNVKTEPDRSRDVSQPLDKLGPDET). [4Fe-4S] cluster-binding residues include C441, C447, C486, and C490. C490 lines the siroheme pocket.

This sequence belongs to the nitrite and sulfite reductase 4Fe-4S domain family. In terms of assembly, alpha(8)-beta(8). The alpha component is a flavoprotein, the beta component is a hemoprotein. Requires siroheme as cofactor. It depends on [4Fe-4S] cluster as a cofactor.

It carries out the reaction hydrogen sulfide + 3 NADP(+) + 3 H2O = sulfite + 3 NADPH + 4 H(+). The protein operates within sulfur metabolism; hydrogen sulfide biosynthesis; hydrogen sulfide from sulfite (NADPH route): step 1/1. Functionally, component of the sulfite reductase complex that catalyzes the 6-electron reduction of sulfite to sulfide. This is one of several activities required for the biosynthesis of L-cysteine from sulfate. This chain is Sulfite reductase [NADPH] hemoprotein beta-component, found in Nitrobacter hamburgensis (strain DSM 10229 / NCIMB 13809 / X14).